The sequence spans 577 residues: DEAD-box ATP-dependent RNA helicase 22 (577 aa).

A Q motif motif is present at residues 82 to 110 (TSWESLGVSDRLASALHGAGLARPSLVQA). One can recognise a Helicase ATP-binding domain in the interval 113-375 (IPHVLTTNDV…GGVLKRMFPN (263 aa)). Residue 126-133 (AETGSGKT) participates in ATP binding. A DEAD box motif is present at residues 249–252 (DEAD). A disordered region spans residues 288 to 317 (SLGDTNEYREDSDSQSAELSADDEENEDGL). Residues 407-568 (LLDAVKYGLK…SFRNKLKKQA (162 aa)) form the Helicase C-terminal domain.

Belongs to the DEAD box helicase family.

It carries out the reaction ATP + H2O = ADP + phosphate + H(+). The chain is DEAD-box ATP-dependent RNA helicase 22 from Oryza sativa subsp. japonica (Rice).